The primary structure comprises 223 residues: uncharacterized protein (223 aa).

Residues 11 to 71 (EATFESFIDA…YLLEKRQMKK (61 aa)) enclose the HTH tetR-type domain. Positions 34 to 53 (SVEDISRAAGYSKGAFYVHF) form a DNA-binding region, H-T-H motif.

This is an uncharacterized protein from Bacillus subtilis (strain 168).